The sequence spans 61 residues: Probable tautomerase BH3814 (61 aa).

P2 functions as the Proton acceptor; via imino nitrogen in the catalytic mechanism.

Belongs to the 4-oxalocrotonate tautomerase family.

The chain is Probable tautomerase BH3814 from Halalkalibacterium halodurans (strain ATCC BAA-125 / DSM 18197 / FERM 7344 / JCM 9153 / C-125) (Bacillus halodurans).